The primary structure comprises 433 residues: Pyrimidine-nucleoside phosphorylase (433 aa).

81–83 (KHS) lines the phosphate pocket. K(+)-binding residues include G88 and T90. Residues T92, 108-110 (KMS), and T120 contribute to the phosphate site. 2 residues coordinate substrate: R168 and K187. The K(+) site is built by L243, A246, and E255.

Belongs to the thymidine/pyrimidine-nucleoside phosphorylase family. In terms of assembly, homodimer. K(+) serves as cofactor.

It carries out the reaction uridine + phosphate = alpha-D-ribose 1-phosphate + uracil. The enzyme catalyses thymidine + phosphate = 2-deoxy-alpha-D-ribose 1-phosphate + thymine. The catalysed reaction is 2'-deoxyuridine + phosphate = 2-deoxy-alpha-D-ribose 1-phosphate + uracil. Catalyzes phosphorolysis of the pyrimidine nucleosides uridine, thymidine and 2'-deoxyuridine with the formation of the corresponding pyrimidine base and ribose-1-phosphate. The protein is Pyrimidine-nucleoside phosphorylase (pdp) of Staphylococcus aureus (strain MSSA476).